A 609-amino-acid polypeptide reads, in one-letter code: Zinc metalloproteinase/disintegrin-like HR1a (609 aa).

Residues 1 to 20 form the signal peptide; that stretch reads MIQVLLVTICLAVFPYQGSS. Residues 21–190 constitute a propeptide that is removed on maturation; it reads IILGSGNVND…KKASKLVVTA (170 aa). Positions 200–396 constitute a Peptidase M12B domain; it reads RFIELVIVAD…DEPQCILNEP (197 aa). Ca(2+) contacts are provided by Glu-203 and Asp-287. A glycan (N-linked (GlcNAc...) asparagine) is linked at Asn-298. Cystine bridges form between Cys-311/Cys-391, Cys-351/Cys-375, and Cys-353/Cys-358. Residue His-336 coordinates Zn(2+). Glu-337 is an active-site residue. Residues His-340 and His-346 each coordinate Zn(2+). Asn-350 carries N-linked (GlcNAc...) asparagine glycosylation. An N-linked (GlcNAc...) asparagine glycan is attached at Asn-374. Ca(2+) is bound by residues Cys-391 and Asn-394. Residues 397 to 400 constitute a propeptide that is removed on maturation; sequence LRTD. The region spanning 404–490 is the Disintegrin domain; that stretch reads PPVCGNELLE…DCPTDRFHRN (87 aa). Residues Val-406, Asn-409, Leu-411, Glu-413, Glu-416, and Asp-419 each coordinate Ca(2+). 22 cysteine pairs are disulfide-bonded: Cys-407-Cys-426, Cys-407-Cys-436, Cys-418-Cys-431, Cys-418-Cys-436, Cys-420-Cys-426, Cys-430-Cys-453, Cys-444-Cys-450, Cys-449-Cys-475, Cys-462-Cys-482, Cys-469-Cys-494, Cys-469-Cys-501, Cys-494-Cys-506, Cys-501-Cys-506, Cys-513-Cys-528, Cys-513-Cys-563, Cys-528-Cys-571, Cys-541-Cys-551, Cys-551-Cys-558, Cys-558-Cys-597, Cys-563-Cys-571, Cys-591-Cys-602, and Cys-597-Cys-602. Residues 468–470 carry the D/ECD-tripeptide motif; the sequence is ECD. Ca(2+) contacts are provided by Asp-470, Glu-473, and Asp-485. A glycan (N-linked (GlcNAc...) asparagine) is linked at Asn-520.

This sequence belongs to the venom metalloproteinase (M12B) family. P-III subfamily. P-IIIb sub-subfamily. As to quaternary structure, monomer. Zn(2+) serves as cofactor. In terms of tissue distribution, expressed by the venom gland.

It is found in the secreted. Functionally, zinc protease that induces hemorrhage and has proteolytic activity. Has preference for Ala, His, Pro, Met, and Tyr at the P1 position, in descending order (in vitro). Predominantly prefers Val and Asp at the P3 and P2 positions, respectively. In terms of biological role, inhibits platelet aggregation induced by ADP, thrombin, platelet-activating factor and collagen. Acts by inhibiting fibrinogen interaction with platelet receptors alpha-IIb/beta-3 (ITGA2B/ITGB3). The protein is Zinc metalloproteinase/disintegrin-like HR1a of Protobothrops flavoviridis (Habu).